A 528-amino-acid polypeptide reads, in one-letter code: Peptide chain release factor 3 (528 aa).

The tr-type G domain maps to 10–278 (DRRRTFGIIS…AFVEQAPVPR (269 aa)). Residues 19 to 26 (SHPDAGKT), 87 to 91 (DTPGH), and 141 to 144 (NKLD) contribute to the GTP site.

Belongs to the TRAFAC class translation factor GTPase superfamily. Classic translation factor GTPase family. PrfC subfamily.

The protein resides in the cytoplasm. In terms of biological role, increases the formation of ribosomal termination complexes and stimulates activities of RF-1 and RF-2. It binds guanine nucleotides and has strong preference for UGA stop codons. It may interact directly with the ribosome. The stimulation of RF-1 and RF-2 is significantly reduced by GTP and GDP, but not by GMP. The sequence is that of Peptide chain release factor 3 from Syntrophotalea carbinolica (strain DSM 2380 / NBRC 103641 / GraBd1) (Pelobacter carbinolicus).